We begin with the raw amino-acid sequence, 483 residues long: Threonine synthase-like 2 (483 aa).

The residue at position 113 (Lys113) is an N6-(pyridoxal phosphate)lysine.

It belongs to the threonine synthase family. The cofactor is pyridoxal 5'-phosphate.

Its function is as follows. Acts as a catabolic phospho-lyase on both gamma- and beta-phosphorylated substrates. Degrades O-phospho-threonine (PThr) to alpha-ketobutyrate, ammonia and phosphate. Also degrades O-phospho-homoserine (PHS), but this is not its physiological substrate. The protein is Threonine synthase-like 2 (Thnsl2) of Mus musculus (Mouse).